The primary structure comprises 437 residues: MPIANATTVHSDIDHGTKALYSKITWRLIPFLCFCYLAAYLDRINVGFAKLQMLEDLQFSTAAYGLGAGLFFVGYIIFEVPSNLILQRVGAKLWIARIMITWGLLSACTMFVTSTTQFYILRFLLGAAEAGFLPGVLYYLTMWYPTYRRGRIIALFMIGLPLSSVIGGPISGWIMGHFDQVQGLHGWQWLFLLEAIPSVLLGILTFWALPNHFQQAKWLSADDKAQLAADLAADDAEGKDSKHSFRDGFFNLKVWMLGGIDFSILLSAYAMGFWMPTFIRDAGVSDTFHIGLLTAIPSLAALAGMLMIGASSDRHRERRWHIIVPFIIGAIAMASSTLFSQNLVMTVVLFAIASAAIIGAVPVFFSLPATFLKGTAAATGFALACSVANIAGLVSNSLMGVVTDLTGTSHAALWVFAGCLILSCFLVIALPAKLVNR.

A run of 12 helical transmembrane segments spans residues 28–48 (LIPF…NVGF), 66–86 (LGAG…NLIL), 93–113 (LWIA…MFVT), 123–143 (FLLG…LTMW), 152–172 (IIAL…PISG), 189–209 (WLFL…FWAL), 254–274 (VWML…MGFW), 290–310 (IGLL…MIGA), 320–340 (WHII…TLFS), 347–367 (VVLF…FFSL), 374–394 (GTAA…AGLV), and 411–431 (AALW…IALP).

This sequence belongs to the major facilitator superfamily.

It localises to the membrane. Functionally, probable transporter, possibly involved in the aerobic nicotinate degradation pathway. The polypeptide is Putative metabolite transport protein NicT (nicT) (Pseudomonas putida (strain ATCC 47054 / DSM 6125 / CFBP 8728 / NCIMB 11950 / KT2440)).